Consider the following 337-residue polypeptide: Probable cytosolic iron-sulfur protein assembly protein 1 (337 aa).

WD repeat units lie at residues 11-50 (LHNDKVWSIDFEPVRGLLATGSTDRAIKVLQLKNGKENLL), 57-96 (VHKKAVRSVAWRPHSDLLAAGSFDSTISIWTQSDLDLEEG), 109-148 (GHENEVKGISWSQDGCLLATCSRDKSVWIWETDEAGEEYE), 155-194 (EHSQDVKHVVWHTKHNLLASSSYDDTVRIWKDYDDDWECA), 199-240 (GHEG…EDDQ), 252-290 (AHRSQIYGVAWSPSGRIASVGADGVLAVYKEKQNDSEVS), and 301-337 (AHTVYEINTVKWVNIDGKEMLITAGDDGRVNLWNYQD).

Belongs to the WD repeat CIA1 family. Interacts with NAR1.

It is found in the cytoplasm. It localises to the nucleus. Essential component of the cytosolic iron-sulfur (Fe/S) protein assembly machinery. Required for the maturation of extramitochondrial Fe/S proteins. The chain is Probable cytosolic iron-sulfur protein assembly protein 1 from Candida glabrata (strain ATCC 2001 / BCRC 20586 / JCM 3761 / NBRC 0622 / NRRL Y-65 / CBS 138) (Yeast).